The chain runs to 212 residues: Telomere repeats-binding bouquet formation protein 2 (212 aa).

This sequence belongs to the TERB2 family. Component of the MAJIN-TERB1-TERB2 complex.

In terms of biological role, meiosis-specific telomere-associated protein involved in meiotic telomere attachment to the nucleus inner membrane, a crucial step for homologous pairing and synapsis. Component of the MAJIN-TERB1-TERB2 complex, which promotes telomere cap exchange by mediating attachment of telomeric DNA to the inner nuclear membrane and replacement of the protective cap of telomeric chromosomes: in early meiosis, the MAJIN-TERB1-TERB2 complex associates with telomeric DNA and the shelterin/telosome complex. During prophase, the complex matures and promotes release of the shelterin/telosome complex from telomeric DNA. This chain is Telomere repeats-binding bouquet formation protein 2, found in Danio rerio (Zebrafish).